The chain runs to 432 residues: Glutamyl-tRNA reductase (432 aa).

Residues 55–58 (TCNR), Ser114, 119–121 (ETQ), and Gln125 each bind substrate. Cys56 (nucleophile) is an active-site residue. Residue 194 to 199 (GAGEMI) coordinates NADP(+).

It belongs to the glutamyl-tRNA reductase family. As to quaternary structure, homodimer.

It catalyses the reaction (S)-4-amino-5-oxopentanoate + tRNA(Glu) + NADP(+) = L-glutamyl-tRNA(Glu) + NADPH + H(+). Its pathway is porphyrin-containing compound metabolism; protoporphyrin-IX biosynthesis; 5-aminolevulinate from L-glutamyl-tRNA(Glu): step 1/2. Its function is as follows. Catalyzes the NADPH-dependent reduction of glutamyl-tRNA(Glu) to glutamate 1-semialdehyde (GSA). This chain is Glutamyl-tRNA reductase, found in Burkholderia multivorans (strain ATCC 17616 / 249).